Consider the following 357-residue polypeptide: Nitronate monooxygenase npaC (357 aa).

3 residues coordinate FMN: glutamine 167, glycine 172, and glycine 206.

The protein belongs to the nitronate monooxygenase family. NMO class I subfamily. FMN is required as a cofactor.

Functionally, nitronate monooxygenase; part of the gene cluster that mediates the biosynthesis of the deadly neurotoxic nitroalkane 3-nitropropanoic acid (3-NPA) that acts as an antimetabolite of succinate and irreversibly inhibits succinate dehydrogenase and disrupts mitochondrial oxidative phosphorylation. Catalyzes the oxidation of 3-NPA to nitrite and malonic semialdehyde. NpaC is not conserved in all fungal npa clusters and, while it is possible that it serves as a self-protection mechanism against accumulation of 3-NPA (by npaA and npaB) in the producing host, the more likely scenario may be the three enzymes representing an alternative catabolic pathway of aspartate to generate readily metabolizable nitrogen and carbon sources. The sequence is that of Nitronate monooxygenase npaC from Metarhizium robertsii (strain ARSEF 23 / ATCC MYA-3075) (Metarhizium anisopliae (strain ARSEF 23)).